Here is a 215-residue protein sequence, read N- to C-terminus: UPF0502 protein YceH (215 aa).

Lysine 80 carries the post-translational modification N6-acetyllysine.

Belongs to the UPF0502 family.

The sequence is that of UPF0502 protein YceH from Escherichia coli O127:H6 (strain E2348/69 / EPEC).